A 252-amino-acid polypeptide reads, in one-letter code: MMPLIDLWTALPLAKLEVGHHFYWYIGNLRVHGQVFITTWFVMALLIAVAFVASRNIQRVPSGIQNLMEYALEFIRDLTKSQMGEHEYRAWVPFVGTLFLFIFVCNWSGALVPWKLIELPEGELAAPTNDINTTVALALLVSLAYFYAGLRKRGLKYFTKYIEPTPVLLPIAILEDFTKPLSLSFRLFGNILADELVVSVLVLLVPLFVPLPVMVLGLFTSAIQALVFATLAATYIGEAMEGHGGDHEAAHS.

5 helical membrane-spanning segments follow: residues 33-53 (GQVF…AFVA), 92-112 (VPFV…GALV), 130-150 (DINT…YAGL), 196-216 (LVVS…VMVL), and 217-237 (GLFT…TYIG).

This sequence belongs to the ATPase A chain family. In terms of assembly, F-type ATPases have 2 components, CF(1) - the catalytic core - and CF(0) - the membrane proton channel. CF(1) has five subunits: alpha(3), beta(3), gamma(1), delta(1), epsilon(1). CF(0) has four main subunits: a, b, b' and c.

It localises to the cellular thylakoid membrane. Functionally, key component of the proton channel; it plays a direct role in the translocation of protons across the membrane. The protein is ATP synthase subunit a of Thermosynechococcus vestitus (strain NIES-2133 / IAM M-273 / BP-1).